A 202-amino-acid chain; its full sequence is ATP-dependent Clp protease proteolytic subunit (202 aa).

Ser-101 serves as the catalytic Nucleophile. His-126 is an active-site residue.

Belongs to the peptidase S14 family. As to quaternary structure, component of the chloroplastic Clp protease core complex.

Its subcellular location is the plastid. It localises to the chloroplast stroma. The catalysed reaction is Hydrolysis of proteins to small peptides in the presence of ATP and magnesium. alpha-casein is the usual test substrate. In the absence of ATP, only oligopeptides shorter than five residues are hydrolyzed (such as succinyl-Leu-Tyr-|-NHMec, and Leu-Tyr-Leu-|-Tyr-Trp, in which cleavage of the -Tyr-|-Leu- and -Tyr-|-Trp bonds also occurs).. Cleaves peptides in various proteins in a process that requires ATP hydrolysis. Has a chymotrypsin-like activity. Plays a major role in the degradation of misfolded proteins. The protein is ATP-dependent Clp protease proteolytic subunit of Drimys granadensis.